The sequence spans 368 residues: uncharacterized protein (368 aa).

Residues 156 to 182 (SNVNAHNNNNNSNNNNNNNNNSNNNNN) show a composition bias toward low complexity. Disordered stretches follow at residues 156–213 (SNVN…SSPY), 228–259 (ASTN…INDL), and 291–319 (STTS…FSTA). Polar residues predominate over residues 183–194 (LYNQTQFSTRYF). Low complexity-rich tracts occupy residues 195 to 213 (NSNS…SSPY) and 228 to 240 (ASTN…SNNS). Polar residues-rich tracts occupy residues 241–254 (MHTN…TSAD) and 297–311 (IGTN…PSPS).

This is an uncharacterized protein from Saccharomyces cerevisiae (strain ATCC 204508 / S288c) (Baker's yeast).